We begin with the raw amino-acid sequence, 90 residues long: DNA-directed RNA polymerase subunit omega (90 aa).

The tract at residues 69–90 is disordered; it reads RQEQQEQEAAELAAVSSIAHNR.

This sequence belongs to the RNA polymerase subunit omega family. As to quaternary structure, the RNAP catalytic core consists of 2 alpha, 1 beta, 1 beta' and 1 omega subunit. When a sigma factor is associated with the core the holoenzyme is formed, which can initiate transcription.

It catalyses the reaction RNA(n) + a ribonucleoside 5'-triphosphate = RNA(n+1) + diphosphate. Promotes RNA polymerase assembly. Latches the N- and C-terminal regions of the beta' subunit thereby facilitating its interaction with the beta and alpha subunits. The chain is DNA-directed RNA polymerase subunit omega from Vibrio parahaemolyticus serotype O3:K6 (strain RIMD 2210633).